We begin with the raw amino-acid sequence, 453 residues long: Putative F-box/FBD/LRR-repeat protein At1g66290 (453 aa).

Residues 1-28 (MDEDGERRVRTKRSCSPESSDNGSGDEV) are disordered. The segment covering 14-23 (SCSPESSDNG) has biased composition (polar residues). Residues 28–81 (VDWISDLPEALIVLVLLNLPTKDVIKTSVLSTKWRNIWRYVPRLDLDNRHFTEF) enclose the F-box domain. 5 LRR repeats span residues 155–179 (SLKL…VLVL), 210–235 (LDNV…SSKS), 246–269 (APKL…NLSS), 305–329 (LSRV…RCEP), and 358–381 (CSNL…IISE). Positions 373 to 423 (RKRTSIISEPRCLLSSLEYVKIEFALDKGKMELVRYLLENSPILKKLTLSL) constitute an FBD domain.

The sequence is that of Putative F-box/FBD/LRR-repeat protein At1g66290 from Arabidopsis thaliana (Mouse-ear cress).